We begin with the raw amino-acid sequence, 369 residues long: Aminomethyltransferase (369 aa).

The protein belongs to the GcvT family. In terms of assembly, the glycine cleavage system is composed of four proteins: P, T, L and H.

The enzyme catalyses N(6)-[(R)-S(8)-aminomethyldihydrolipoyl]-L-lysyl-[protein] + (6S)-5,6,7,8-tetrahydrofolate = N(6)-[(R)-dihydrolipoyl]-L-lysyl-[protein] + (6R)-5,10-methylene-5,6,7,8-tetrahydrofolate + NH4(+). In terms of biological role, the glycine cleavage system catalyzes the degradation of glycine. The polypeptide is Aminomethyltransferase (Synechococcus sp. (strain CC9311)).